Reading from the N-terminus, the 130-residue chain is Large ribosomal subunit protein bL12 (130 aa).

This sequence belongs to the bacterial ribosomal protein bL12 family. In terms of assembly, homodimer. Part of the ribosomal stalk of the 50S ribosomal subunit. Forms a multimeric L10(L12)X complex, where L10 forms an elongated spine to which 2 to 4 L12 dimers bind in a sequential fashion. Binds GTP-bound translation factors.

Functionally, forms part of the ribosomal stalk which helps the ribosome interact with GTP-bound translation factors. Is thus essential for accurate translation. This is Large ribosomal subunit protein bL12 from Cutibacterium acnes (strain DSM 16379 / KPA171202) (Propionibacterium acnes).